Reading from the N-terminus, the 205-residue chain is Ribosome maturation factor RimP (205 aa).

It belongs to the RimP family.

It is found in the cytoplasm. Functionally, required for maturation of 30S ribosomal subunits. This is Ribosome maturation factor RimP from Sinorhizobium medicae (strain WSM419) (Ensifer medicae).